A 599-amino-acid polypeptide reads, in one-letter code: RING finger protein unkempt (599 aa).

5 consecutive C3H1-type zinc fingers follow at residues 71–100 (YSADNYCTKYDETTGICPEGDECPYLHRTA), 111–141 (YYKTCMCVHDTDSRGYCVKNGLHCAFAHGMQ), 194–220 (NYKTEPCKRPPRLCRQGYACPQYHNSK), 230–264 (KYRSTPCPNVKHGEEWGEPGNCEAGDNCQYCHTRT), and 272–300 (IYKSTKCNDVQQAGYCPRSVFCAFAHVEP). Serine 411 bears the Phosphoserine mark. An RING-type zinc finger spans residues 556 to 591 (CMKCEENNRTVTLEPCNHLSICNTCAESVTECPYCQ).

It belongs to the unkempt family. Ubiquitous in most somatic tissues from syncytial embryo through to embryo stage 15. Expression becomes restricted predominantly to the CNS at stages 16 and 17.

The protein localises to the cytoplasm. Essential for late larval/early pupal development. This Drosophila melanogaster (Fruit fly) protein is RING finger protein unkempt (unk).